Consider the following 551-residue polypeptide: Malate synthase, glyoxysomal (551 aa).

Arg174 serves as the catalytic Proton acceptor. The active-site Proton donor is the Asp458.

Belongs to the malate synthase family.

The protein resides in the glyoxysome. The catalysed reaction is glyoxylate + acetyl-CoA + H2O = (S)-malate + CoA + H(+). Its pathway is carbohydrate metabolism; glyoxylate cycle; (S)-malate from isocitrate: step 2/2. This chain is Malate synthase, glyoxysomal (PMS1), found in Candida tropicalis (Yeast).